Reading from the N-terminus, the 187-residue chain is GTP cyclohydrolase 1 (187 aa).

Residues C76, H79, and C148 each contribute to the Zn(2+) site.

This sequence belongs to the GTP cyclohydrolase I family. Toroid-shaped homodecamer, composed of two pentamers of five dimers.

The enzyme catalyses GTP + H2O = 7,8-dihydroneopterin 3'-triphosphate + formate + H(+). It functions in the pathway cofactor biosynthesis; 7,8-dihydroneopterin triphosphate biosynthesis; 7,8-dihydroneopterin triphosphate from GTP: step 1/1. This Streptococcus agalactiae serotype V (strain ATCC BAA-611 / 2603 V/R) protein is GTP cyclohydrolase 1.